The following is a 293-amino-acid chain: tRNA (guanine-N(7)-)-methyltransferase (293 aa).

Basic and acidic residues predominate over residues 1-31 (MGGDKIKKDKRQKREDYRAAMRKDDISELPR). Disordered regions lie at residues 1-33 (MGGD…PRKK) and 68-97 (IVDE…TPLR). Over residues 75–85 (TSPPPPPPVPE) the composition is skewed to pro residues. S-adenosyl-L-methionine-binding positions include Gly111, 134–135 (EI), 169–170 (NT), and Cys189. Asp192 is an active-site residue. 267-269 (TEE) lines the S-adenosyl-L-methionine pocket.

This sequence belongs to the class I-like SAM-binding methyltransferase superfamily. TrmB family. In terms of assembly, forms a complex with TRM82.

It is found in the nucleus. The enzyme catalyses guanosine(46) in tRNA + S-adenosyl-L-methionine = N(7)-methylguanosine(46) in tRNA + S-adenosyl-L-homocysteine. It participates in tRNA modification; N(7)-methylguanine-tRNA biosynthesis. Its function is as follows. Catalyzes the formation of N(7)-methylguanine at position 46 (m7G46) in tRNA. This is tRNA (guanine-N(7)-)-methyltransferase from Chaetomium globosum (strain ATCC 6205 / CBS 148.51 / DSM 1962 / NBRC 6347 / NRRL 1970) (Soil fungus).